The following is a 163-amino-acid chain: RRM-domain-containing protein ECU01_0840 (163 aa).

Residues 84–163 (CSVKLSNLPL…SLGLSAEIAR (80 aa)) form the RRM domain.

The sequence is that of RRM-domain-containing protein ECU01_0840 from Encephalitozoon cuniculi (strain GB-M1) (Microsporidian parasite).